We begin with the raw amino-acid sequence, 185 residues long: Der GTPase-activating protein YihI (185 aa).

Disordered regions lie at residues 1–74 (MGRS…KKKI) and 145–169 (EPED…SSDE). Residues 23–33 (NRSESDVEGRE) show a composition bias toward basic and acidic residues. A compositionally biased stretch (basic residues) spans 34–47 (RKRVKKRKGLKSGS). Over residues 48-68 (RHSDGSEAKQRKAALARDPRL) the composition is skewed to basic and acidic residues. Residues 145–155 (EPEDDEEEIFE) show a composition bias toward acidic residues.

It belongs to the YihI family. As to quaternary structure, interacts with Der.

In terms of biological role, a GTPase-activating protein (GAP) that modifies Der/EngA GTPase function. May play a role in ribosome biogenesis. The chain is Der GTPase-activating protein YihI from Vibrio atlanticus (strain LGP32) (Vibrio splendidus (strain Mel32)).